A 599-amino-acid chain; its full sequence is Afamin (599 aa).

The N-terminal stretch at M1–T21 is a signal peptide. Albumin domains lie at L22 to T210, Q211 to E403, and T404 to N599. N33 carries an N-linked (GlcNAc...) (complex) asparagine glycan. Intrachain disulfides connect C77–C86, C99–C114, C113–C124, C148–C193, C192–C201, C224–C270, C269–C277, C289–C303, C302–C313, C340–C385, and C384–C393. N109 carries N-linked (GlcNAc...) (complex) asparagine glycosylation. The segment at A215 to K319 is binding pocket for hydrophobic ligands. N383 carries N-linked (GlcNAc...) (complex) asparagine; atypical glycosylation. The N-linked (GlcNAc...) (complex) asparagine glycan is linked to N402. 6 cysteine pairs are disulfide-bonded: C416–C462, C461–C470, C483–C499, C498–C509, C536–C581, and C580–C589. N488 carries N-linked (GlcNAc...) asparagine glycosylation.

The protein belongs to the ALB/AFP/VDB family. Forms a 1:1 complex with Wnt family members; interacts with WNT1, WNT2B, WNT3, WNT3A, WNT5A, WNT7A, WNT7B, WNT8, WNT9A, WNT9B, WNT10A and WNT10B. Post-translationally, N-glycosylated; more than 90% of the glycans are sialylated. As to expression, high level detected in plasma but also in extravascular fluids such as follicular and cerebrospinal fluids (at protein level).

It localises to the secreted. Functionally, functions as a carrier for hydrophobic molecules in body fluids. Essential for the solubility and activity of lipidated Wnt family members, including WNT1, WNT2B, WNT3, WNT3A, WNT5A, WNT7A, WNT7B, WNT8, WNT9A, WNT9B, WNT10A and WNT10B. Binds vitamin E. May transport vitamin E in body fluids under conditions where the lipoprotein system is not sufficient. May be involved in the transport of vitamin E across the blood-brain barrier. This Homo sapiens (Human) protein is Afamin (AFM).